Here is a 548-residue protein sequence, read N- to C-terminus: Hydroxylamine reductase (548 aa).

4 residues coordinate [4Fe-4S] cluster: Cys3, Cys6, Cys15, and Cys21. The hybrid [4Fe-2O-2S] cluster site is built by His239, Glu263, Cys307, Cys401, Cys429, Cys454, Glu489, and Lys491. At Cys401 the chain carries Cysteine persulfide.

This sequence belongs to the HCP family. The cofactor is [4Fe-4S] cluster. Requires hybrid [4Fe-2O-2S] cluster as cofactor.

The protein resides in the cytoplasm. It catalyses the reaction A + NH4(+) + H2O = hydroxylamine + AH2 + H(+). Its function is as follows. Catalyzes the reduction of hydroxylamine to form NH(3) and H(2)O. In Desulfosudis oleivorans (strain DSM 6200 / JCM 39069 / Hxd3) (Desulfococcus oleovorans), this protein is Hydroxylamine reductase.